A 500-amino-acid polypeptide reads, in one-letter code: Neuronal pentraxin receptor (500 aa).

The Cytoplasmic segment spans residues 1-2; sequence MK. The chain crosses the membrane as a helical; Signal-anchor for type II membrane protein span at residues 3–23; the sequence is FLAVLLAAGMLAFLGAVICII. Residues 24 to 500 are Extracellular-facing; the sequence is ASVPLAASPA…FDVCKGRAKA (477 aa). Asparagine 42 carries an N-linked (GlcNAc...) asparagine glycan. The segment covering 42 to 63 has biased composition (low complexity); that stretch reads NASVASGAAASPGPQRSLSALH. Disordered stretches follow at residues 42-81 and 162-183; these read NASVASGAAASPGPQRSLSALHGAGGSAGPPALPGAPAAS and ESGLPRGLQGAGPRRDTMADGP. An N-linked (GlcNAc...) asparagine glycan is attached at asparagine 216. The Pentraxin (PTX) domain maps to 292–494; that stretch reads DAFKISIPIR…GATKAAFDVC (203 aa). Cysteine 322 and cysteine 383 are oxidised to a cystine. Ca(2+) contacts are provided by asparagine 347, glutamate 425, glutamine 426, aspartate 427, and glutamine 437. Asparagine 463 is a glycosylation site (N-linked (GlcNAc...) asparagine).

In terms of assembly, heteropentamer with NPTX1 and/or NPTX2. Also binds taipoxin-associated calcium-binding protein 49 (TCBP49/RCN2). Interacts with KLHL2. It depends on Ca(2+) as a cofactor. Post-translationally, ubiquitinated by a cullin-RING-based BCR (BTB-CUL3-RBX1) E3 ubiquitin-protein ligase complex containing KLHL2.

It localises to the membrane. Functionally, may be involved in mediating uptake of synaptic material during synapse remodeling or in mediating the synaptic clustering of AMPA glutamate receptors at a subset of excitatory synapses. The sequence is that of Neuronal pentraxin receptor (NPTXR) from Homo sapiens (Human).